Consider the following 802-residue polypeptide: Homeobox-leucine zipper protein ANTHOCYANINLESS 2 (802 aa).

The interval 71–143 is disordered; sequence QPERGTNRGE…RKKRYHRHTP (73 aa). Positions 103-113 are enriched in basic and acidic residues; sequence RSREEEHESRS. The span at 133–142 shows a compositional bias: basic residues; the sequence is PRKKRYHRHT. The homeobox DNA-binding region spans 134–193; sequence RKKRYHRHTPQQIQELESMFKECPHPDEKQRLELSKRLCLETRQVKFWFQNRRTQMKTQL. Residues 182-221 adopt a coiled-coil conformation; the sequence is FQNRRTQMKTQLERHENALLRQENDKLRAENMSIREAMRN. The START domain maps to 315 to 546; sequence GIDQKSVLLE…LQRQCECLAI (232 aa).

The protein belongs to the HD-ZIP homeobox family. Class IV subfamily. In terms of assembly, interacts with AIL7/PLT7, ANT, BBM and AIL1. In terms of tissue distribution, expressed in roots, stems, leaves and floral buds.

It localises to the nucleus. Probable transcription factor involved in the regulation of the tissue-specific accumulation of anthocyanins and in cellular organization of the primary root. This chain is Homeobox-leucine zipper protein ANTHOCYANINLESS 2, found in Arabidopsis thaliana (Mouse-ear cress).